An 810-amino-acid chain; its full sequence is Protein kinase C-binding protein NELL1 (810 aa).

The signal sequence occupies residues 1 to 21 (MPMDVILVLWFCVCTARTVLG). N-linked (GlcNAc...) asparagine glycosylation is found at N40, N53, N83, N224, N294, and N372. The region spanning 57–227 (AFLFQDVQRE…TQCPNLNRTC (171 aa)) is the Laminin G-like domain. Positions 271–332 (KTCQVSGLLY…ISGQCCKVCR (62 aa)) constitute a VWFC 1 domain. 3 cysteine pairs are disulfide-bonded: C395/C407, C401/C416, and C418/C432. Ca(2+) is bound by residues D434, I435, and E437. The EGF-like 1; calcium-binding domain occupies 434-475 (DIDECAAKMHYCHANTVCVNLPGLYRCDCIPGYIRVDDFSCT). 15 disulfide bridges follow: C438-C451, C445-C460, C462-C474, C480-C493, C487-C502, C504-C515, C519-C529, C523-C535, C537-C546, C553-C566, C560-C575, C577-C594, C600-C613, C607-C622, and C624-C630. Residues N453, L454, and L457 each contribute to the Ca(2+) site. Residues 476-516 (EHDDCGSGQHNCDKNAICTNTVQGHSCTCQPGYVGNGTVCK) form the EGF-like 2; calcium-binding domain. A glycan (N-linked (GlcNAc...) asparagine) is linked at N511. An EGF-like 3 domain is found at 517-547 (AFCEEGCRYGGTCVAPNKCVCPSGFTGSHCE). One can recognise an EGF-like 4; calcium-binding domain in the interval 549-587 (DIDECAEGFVECHNHSRCVNLPGWYHCECRSGFHDDGTY). N562 carries N-linked (GlcNAc...) asparagine glycosylation. Residues 596–631 (DIDECALRTHTCWNDSACINLAGGFDCLCPSGPSCS) enclose the EGF-like 5; calcium-binding domain. N609 carries N-linked (GlcNAc...) asparagine glycosylation. 2 consecutive VWFC domains span residues 632–687 (GDCP…PECD) and 692–750 (SQCL…PRCV). Residue N708 is glycosylated (N-linked (GlcNAc...) asparagine).

As to quaternary structure, homotrimer. Binds to PKC beta-1. Interacts with ATRAID; the interaction promotes osteoblast cell differentiation and mineralization. Interacts with ROBO3.

Its subcellular location is the cytoplasm. It is found in the nucleus envelope. The protein resides in the secreted. Its function is as follows. Plays a role in the control of cell growth and differentiation. Promotes osteoblast cell differentiation and terminal mineralization. This is Protein kinase C-binding protein NELL1 (Nell1) from Mus musculus (Mouse).